The sequence spans 744 residues: Tripartite motif-containing protein 2 (744 aa).

Ser10 carries the phosphoserine modification. An RING-type zinc finger spans residues 23-64 (CSICLERYKNPKVLPCLHTFCERCLQNYIPAHSLTLSCPVCR). The B box-type zinc finger occupies 113–154 (GKPLSCPNHDGNVMDFYCQSCETAMCRECTEGEHAEHPTVPL). The Zn(2+) site is built by Cys118, His121, Cys141, and His146. The stretch at 320–421 (TTNAVASETV…IRGSPFKLKV (102 aa)) is one Filamin repeat. The residue at position 371 (Thr371) is a Phosphothreonine. Phosphoserine is present on residues Ser375, Ser424, and Ser428. Residues 432–462 (EGVKRRVKSPGSGHVKQKAVKRPASMYSTGK) form a disordered region. NHL repeat units lie at residues 473–516 (IFRV…FSND), 520–563 (KSRF…FSSD), 564–605 (GKFK…FQPN), 609–652 (VTRF…FNQE), 656–699 (MLKF…FDGS), and 700–743 (GSFL…YRYL).

It belongs to the TRIM/RBCC family. Forms homooligomers. Interacts with TRIM3; this interaction reduces TRIM2 activity. Interacts with myosin V; myosin V may not be a substrate for ubiquitination. Interacts with NEFL. Interacts with phosphorylated BCL2L11. Interacts with SIRPA. In terms of processing, RING-type zinc finger-dependent and UBE2D1-dependent autoubiquitination.

The protein localises to the cytoplasm. The catalysed reaction is S-ubiquitinyl-[E2 ubiquitin-conjugating enzyme]-L-cysteine + [acceptor protein]-L-lysine = [E2 ubiquitin-conjugating enzyme]-L-cysteine + N(6)-ubiquitinyl-[acceptor protein]-L-lysine.. The protein operates within protein modification; protein ubiquitination. Its function is as follows. UBE2D1-dependent E3 ubiquitin-protein ligase that mediates the ubiquitination of NEFL and of phosphorylated BCL2L11. Plays a neuroprotective function. May play a role in neuronal rapid ischemic tolerance. Plays a role in antiviral immunity and limits New World arenavirus infection independently of its ubiquitin ligase activity. The sequence is that of Tripartite motif-containing protein 2 (TRIM2) from Bos taurus (Bovine).